The primary structure comprises 366 residues: Transcription factor MYB28 (366 aa).

HTH myb-type domains follow at residues 9–61 (GEGL…TNYL) and 62–116 (KPEI…KKRL). DNA-binding regions (H-T-H motif) lie at residues 37-61 (WRDI…TNYL) and 89-112 (WSVI…NTHL). The tract at residues 124-170 (VTHKPLASSSNPTVDENLNSPNASSSDKQYSRSSSMPFLSRPPPSSC) is disordered. Residues 130 to 146 (ASSSNPTVDENLNSPNA) show a composition bias toward polar residues. Low complexity predominate over residues 147–158 (SSSDKQYSRSSS).

In terms of assembly, can form complexes with MYC2, MYC3 or MYC4. As to expression, expressed in generative organs, mature leaves and trichomes.

Its subcellular location is the nucleus. Its function is as follows. Major regulator of short-chained aliphatic glucosinolates (GLSs) biosynthesis. Together with MYB29/HAG3 and MYB76/HAG2, promotes aliphatic glucosinolate biosynthesis but represses indolic glucosinolate biosynthesis. Prevents insect performance (e.g. lepidopteran insect Mamestra brassicae and Spodoptera exigua) by promoting glucosinolates. The protein is Transcription factor MYB28 (MYB28) of Arabidopsis thaliana (Mouse-ear cress).